Consider the following 201-residue polypeptide: Holliday junction resolvase RecU (201 aa).

Mg(2+)-binding residues include Thr-85, Asp-87, Glu-100, and Gln-119.

Belongs to the RecU family. It depends on Mg(2+) as a cofactor.

It is found in the cytoplasm. It carries out the reaction Endonucleolytic cleavage at a junction such as a reciprocal single-stranded crossover between two homologous DNA duplexes (Holliday junction).. Functionally, endonuclease that resolves Holliday junction intermediates in genetic recombination. Cleaves mobile four-strand junctions by introducing symmetrical nicks in paired strands. Promotes annealing of linear ssDNA with homologous dsDNA. Required for DNA repair, homologous recombination and chromosome segregation. This Geobacillus sp. (strain WCH70) protein is Holliday junction resolvase RecU.